The primary structure comprises 799 residues: Oligopeptide transporter 1 (799 aa).

2 disordered regions span residues 1 to 26 and 43 to 64; these read MSTIYRESDSLESEPSPTPTTIPIQI and DVNNLTATTDEEDRDPESQKFD. Residues 1–108 lie on the Extracellular side of the membrane; the sequence is MSTIYRESDS…DPTIRLNHWR (108 aa). Low complexity predominate over residues 13–26; sequence SEPSPTPTTIPIQI. N-linked (GlcNAc...) asparagine glycosylation occurs at asparagine 46. 3 positions are modified to phosphothreonine: threonine 48, threonine 50, and threonine 51. The chain crosses the membrane as a helical span at residues 109 to 129; it reads TWFLTTVFVVVFAGVNQFFSL. At 130-135 the chain is on the cytoplasmic side; sequence RYPSLE. Residues 136–156 form a helical membrane-spanning segment; the sequence is INFLVAQVVCYPIGRILALLP. At 157–177 the chain is on the extracellular side; sequence DWKCSKVPFFDLNPGPFTKKE. A helical transmembrane segment spans residues 178-198; sequence HAVVTIAVALTSSTAYAMYIL. The Cytoplasmic segment spans residues 199 to 210; that stretch reads NAQGSFYNMKLN. The helical transmembrane segment at 211 to 231 threads the bilayer; it reads VGYQFLLVWTSQMIGYGAAGL. The Extracellular portion of the chain corresponds to 232-276; it reads TRRWVVNPASSIWPQTLISVSLFDSLHSRKVEKTVANGWTMPRYR. Residues 277 to 297 traverse the membrane as a helical segment; that stretch reads FFLIVLIGSFIWYWVPGFLFT. Topologically, residues 298–313 are cytoplasmic; the sequence is GLSYFNVILWGSKTRH. Residues 314–334 traverse the membrane as a helical segment; the sequence is NFIANTIFGTQSGLGALPITF. Over 335–359 the chain is Extracellular; it reads DYTQVSQAMSGSVFATPFYVSANTY. Residues 360–380 traverse the membrane as a helical segment; that stretch reads ASVLIFFVIVLPCLYFTNTWY. Residues 381-428 are Cytoplasmic-facing; it reads AKYMPVISGSTYDNTQNKYNVTKILNEDYSINLEKYKEYSPVFVPFSY. The chain crosses the membrane as a helical span at residues 429 to 449; that stretch reads LLSYALNFAAVIAVFVHCILY. The Extracellular segment spans residues 450 to 482; sequence HGKDIVAKFKDRKNGGTDIHMRIYSKNYKDCPD. A helical membrane pass occupies residues 483–503; the sequence is WWYLLLQIVMIGLGFVAVCCF. Over 504–508 the chain is Cytoplasmic; sequence DTKFP. The helical transmembrane segment at 509–529 threads the bilayer; it reads AWAFVIAILISLVNFIPQGIL. The Extracellular segment spans residues 530–540; that stretch reads EAMTNQHVGLN. The helical transmembrane segment at 541–561 threads the bilayer; it reads IITELICGYMLPLRPMANLLF. Topologically, residues 562–590 are cytoplasmic; that stretch reads KLYGFIVMRQGLNLSRDLKLAMYMKVSPR. A helical membrane pass occupies residues 591-611; it reads LIFAVQIYATIISGMVNVGVQ. The Extracellular segment spans residues 612 to 659; sequence EWMMHNIDGLCTTDQPNGFTCANGRTVFNASIIWSLPKYLFSSGRIYN. Asparagine 640 carries an N-linked (GlcNAc...) asparagine glycan. Residues 660–680 traverse the membrane as a helical segment; it reads PLMWFFLIGLLFPLAVYAVQW. The Cytoplasmic portion of the chain corresponds to 681 to 736; it reads KFPKFKFAKHIHTPVFFTGPGNIPPSTPYNYSLFFAMSFCLNLIRKRWRAWFNKYN. Residues 737-757 form a helical membrane-spanning segment; the sequence is FVMGAGVEAGVAISVVIIFLC. Residues 758-799 lie on the Extracellular side of the membrane; that stretch reads VQYPGGKLSWWGNNVWKRTYDNDYKKFYTLKKGETFGYDKWW.

The protein belongs to the oligopeptide OPT transporter family.

Its subcellular location is the cell membrane. In terms of biological role, high affinity transporter for glutathione. Also transports tetra- and pentapeptides like the opioids leucine enkephalin (Tyr-Gly-Gly-Phe-Leu) and methionine enkephalin (Tyr-Gly-Gly_Phe-Met) across the cell membrane. This Saccharomyces cerevisiae (strain ATCC 204508 / S288c) (Baker's yeast) protein is Oligopeptide transporter 1 (OPT1).